Here is a 178-residue protein sequence, read N- to C-terminus: CRISPR system ring nuclease SSO2081 (178 aa).

The transition state stabilizer stretch occupies residues 105 to 106; the sequence is RK.

This sequence belongs to the cOA ring nuclease family. Homodimer. Does not require a metal cofactor. serves as cofactor.

It is found in the cytoplasm. The catalysed reaction is cyclic tetraadenylate = 2 5'-hydroxy-diadenylate 2',3'-cylic phosphate. In terms of biological role, CRISPR (clustered regularly interspaced short palindromic repeat) is an adaptive immune system that provides protection against mobile genetic elements (viruses, transposable elements and conjugative plasmids). CRISPR clusters contain spacers, sequences complementary to antecedent mobile elements, and target invading nucleic acids. CRISPR clusters are transcribed and processed into CRISPR RNA (crRNA). A nuclease that degrades cyclic oligoadenylates (cOA), second messengers that induce an antiviral state important for defense against invading nucleic acids. Destruction of cOA deactivates the Csx1 ribonuclease, preventing uncontrolled degradation of cellular RNA. Degrades cA4 (a tetraadenylate ring) into a linear diadenylate product with 5'-OH and 2',3'-cyclic phosphate termini. Is 10-fold more active than SSO1393, suggesting this is the major cA4 degradation enzyme. Is highly specific for cA4; it has very poor activity on cA6 and no discernible activity against a number of cyclic dinucleotides. There may be 2 active sites per homodimer. This is CRISPR system ring nuclease SSO2081 from Saccharolobus solfataricus (strain ATCC 35092 / DSM 1617 / JCM 11322 / P2) (Sulfolobus solfataricus).